The sequence spans 126 residues: Fluoride-specific ion channel FluC (126 aa).

Transmembrane regions (helical) follow at residues leucine 2–isoleucine 22, valine 37–alanine 57, leucine 65–leucine 85, and alanine 99–methionine 119. Glycine 75 and threonine 78 together coordinate Na(+).

Belongs to the fluoride channel Fluc/FEX (TC 1.A.43) family.

Its subcellular location is the cell inner membrane. The catalysed reaction is fluoride(in) = fluoride(out). With respect to regulation, na(+) is not transported, but it plays an essential structural role and its presence is essential for fluoride channel function. Functionally, fluoride-specific ion channel. Important for reducing fluoride concentration in the cell, thus reducing its toxicity. This chain is Fluoride-specific ion channel FluC, found in Ruegeria sp. (strain TM1040) (Silicibacter sp.).